Consider the following 540-residue polypeptide: DEAD-box ATP-dependent RNA helicase 57 (540 aa).

Positions 24-73 (DFARFRQGPPAPDVASAAAPSPEKKRKRQSKAKAKKSKKRRAEGADSASD) are disordered. The segment covering 47-64 (KKRKRQSKAKAKKSKKRR) has biased composition (basic residues). Positions 101–129 (KSEDSEVVRRRKEVEREIERAAILRKKFD) form a coiled coil. The Q motif motif lies at 146–174 (ELVSRYGCDSYLVGNLSKLGFQEPTPIQR). Positions 177-347 (IPILLSGREC…RTIMHDAVRV (171 aa)) constitute a Helicase ATP-binding domain. 190–197 (APTGSGKT) contributes to the ATP binding site. The DEAD box motif lies at 294-297 (DESD). One can recognise a Helicase C-terminal domain in the interval 375–519 (ALRQSFAESL…EVPSWIKALP (145 aa)).

The protein belongs to the DEAD box helicase family. DDX52/ROK1 subfamily.

The enzyme catalyses ATP + H2O = ADP + phosphate + H(+). The chain is DEAD-box ATP-dependent RNA helicase 57 from Oryza sativa subsp. japonica (Rice).